A 350-amino-acid polypeptide reads, in one-letter code: MTVSPVALRRKTECKPHPTARYWKKCDVEALFGLPFLDLIYQAAEIHRQNFNPREIQLSTLLSIKTGGCPEDCAYCPQSAHHNTNLGKEQMMDVDEIVEKAKIAKSRGASRFCMGAAWRGPKPKDVETVSAIIKAVKGLGMETCGTFGMLEEGMAEDLKEAGLDYYNHNLDTDPDRYNDIIHTRRHEDRMDTLGKVRNAGLKVCCGGIVGMNETRAERAGLIASLANLDPQPESVPINRLVKVEGTPLDDAEDLDWTEFVRTIAVARITMPQSYVRLSAGRSNMPEAMQAMCFMAGANSIFYGDKLLTTGNPDEDGDRILMEKLNLYPLQFELEGEVAEVEKASGIKVDY.

Residues 54–278 (REIQLSTLLS…TMPQSYVRLS (225 aa)) form the Radical SAM core domain. Residues cysteine 69, cysteine 73, and cysteine 76 each coordinate [4Fe-4S] cluster. The [2Fe-2S] cluster site is built by cysteine 113, cysteine 144, cysteine 204, and arginine 276.

This sequence belongs to the radical SAM superfamily. Biotin synthase family. In terms of assembly, homodimer. [4Fe-4S] cluster serves as cofactor. Requires [2Fe-2S] cluster as cofactor.

The enzyme catalyses (4R,5S)-dethiobiotin + (sulfur carrier)-SH + 2 reduced [2Fe-2S]-[ferredoxin] + 2 S-adenosyl-L-methionine = (sulfur carrier)-H + biotin + 2 5'-deoxyadenosine + 2 L-methionine + 2 oxidized [2Fe-2S]-[ferredoxin]. It functions in the pathway cofactor biosynthesis; biotin biosynthesis; biotin from 7,8-diaminononanoate: step 2/2. Its function is as follows. Catalyzes the conversion of dethiobiotin (DTB) to biotin by the insertion of a sulfur atom into dethiobiotin via a radical-based mechanism. This is Biotin synthase from Neisseria meningitidis serogroup A / serotype 4A (strain DSM 15465 / Z2491).